The primary structure comprises 490 residues: Cytochrome P450 2C2 (490 aa).

Heme is bound at residue cysteine 435.

Belongs to the cytochrome P450 family. Heme is required as a cofactor.

It localises to the endoplasmic reticulum membrane. Its subcellular location is the microsome membrane. It catalyses the reaction an organic molecule + reduced [NADPH--hemoprotein reductase] + O2 = an alcohol + oxidized [NADPH--hemoprotein reductase] + H2O + H(+). In terms of biological role, cytochromes P450 are a group of heme-thiolate monooxygenases. In liver microsomes, this enzyme is involved in an NADPH-dependent electron transport pathway. It oxidizes a variety of structurally unrelated compounds, including steroids, fatty acids, and xenobiotics. In the epoxidation of arachidonic acid it generates only 14,15- and 11,12-cis-epoxyeicosatrienoic acids. The protein is Cytochrome P450 2C2 (CYP2C2) of Oryctolagus cuniculus (Rabbit).